The sequence spans 183 residues: UPF0340 protein LCA_1354 (183 aa).

The protein belongs to the UPF0340 family.

The protein is UPF0340 protein LCA_1354 of Latilactobacillus sakei subsp. sakei (strain 23K) (Lactobacillus sakei subsp. sakei).